A 363-amino-acid chain; its full sequence is 3-isopropylmalate dehydrogenase A (363 aa).

78-89 (GPKWGTGAVRPE) contacts NAD(+). Substrate contacts are provided by R96, R106, R135, and D222. Mg(2+)-binding residues include D222, D247, and D251. 287–299 (GSAPDIAGKGIVN) is a binding site for NAD(+).

It belongs to the isocitrate and isopropylmalate dehydrogenases family. Homodimer. The cofactor is Mg(2+). Requires Mn(2+) as cofactor.

It is found in the cytoplasm. The catalysed reaction is (2R,3S)-3-isopropylmalate + NAD(+) = 4-methyl-2-oxopentanoate + CO2 + NADH. It participates in amino-acid biosynthesis; L-leucine biosynthesis; L-leucine from 3-methyl-2-oxobutanoate: step 3/4. Catalyzes the oxidation of 3-carboxy-2-hydroxy-4-methylpentanoate (3-isopropylmalate) to 3-carboxy-4-methyl-2-oxopentanoate. The product decarboxylates to 4-methyl-2 oxopentanoate. The chain is 3-isopropylmalate dehydrogenase A (leu2A) from Aspergillus niger.